We begin with the raw amino-acid sequence, 778 residues long: GRIP and coiled-coil domain-containing protein 1 (778 aa).

The stretch at Ser13–Val61 forms a coiled coil. 3 disordered regions span residues Ser70–Arg157, Tyr186–Arg208, and Gly617–Ser638. Positions Val83–Asp93 are enriched in basic and acidic residues. Low complexity-rich tracts occupy residues Ser94–Ser109 and Ala133–Ser152. Residues Ser152 to Val702 adopt a coiled-coil conformation. Residues Gln716–Leu766 form the GRIP domain.

The protein localises to the cytoplasm. It is found in the golgi apparatus membrane. Its function is as follows. Probably involved in maintaining Golgi structure. The protein is GRIP and coiled-coil domain-containing protein 1 (Gcc1) of Mus musculus (Mouse).